Reading from the N-terminus, the 311-residue chain is Olfactory receptor 10G7 (311 aa).

Topologically, residues Met-1 to Ala-23 are extracellular. Asn-3 carries N-linked (GlcNAc...) asparagine glycosylation. A helical transmembrane segment spans residues Pro-24–Leu-44. Topologically, residues Leu-45–His-52 are cytoplasmic. The helical transmembrane segment at Leu-53–Thr-73 threads the bilayer. The Extracellular portion of the chain corresponds to Val-74–Ala-98. Cys-96 and Cys-188 are oxidised to a cystine. The helical transmembrane segment at Gln-99 to Tyr-119 threads the bilayer. The Cytoplasmic segment spans residues Asp-120 to Arg-138. Residues Ser-139 to Thr-159 form a helical membrane-spanning segment. Residues Ile-160–Met-196 are Extracellular-facing. A helical transmembrane segment spans residues Val-197–Ser-216. Topologically, residues Tyr-217–Ala-236 are cytoplasmic. The chain crosses the membrane as a helical span at residues Phe-237–Ile-257. At Tyr-258–His-268 the chain is on the extracellular side. Residues Gly-269–Leu-289 form a helical membrane-spanning segment. The Cytoplasmic segment spans residues Arg-290 to Glu-311.

The protein belongs to the G-protein coupled receptor 1 family.

It is found in the cell membrane. Its function is as follows. Odorant receptor. In Homo sapiens (Human), this protein is Olfactory receptor 10G7 (OR10G7).